The primary structure comprises 436 residues: Putative F-box/FBD/LRR-repeat protein At5g44960 (436 aa).

Residues 4–50 (CDYINELPDSLLTQILLDLRTKDSVKTSVSSKRWRNLWLNVPGLDLF) form the F-box domain. LRR repeat units lie at residues 287 to 310 (ISSV…SKLG) and 397 to 420 (SAVL…SYKK). Positions 355–407 (EENIDFHEVPQCLISTLEYVHINKLMMMEQSGIKLVNYFIENSAVLKKLTLRF) constitute an FBD domain.

The chain is Putative F-box/FBD/LRR-repeat protein At5g44960 from Arabidopsis thaliana (Mouse-ear cress).